Here is a 348-residue protein sequence, read N- to C-terminus: Phosphoribosylformylglycinamidine cyclo-ligase (348 aa).

This sequence belongs to the AIR synthase family.

Its subcellular location is the cytoplasm. The enzyme catalyses 2-formamido-N(1)-(5-O-phospho-beta-D-ribosyl)acetamidine + ATP = 5-amino-1-(5-phospho-beta-D-ribosyl)imidazole + ADP + phosphate + H(+). The protein operates within purine metabolism; IMP biosynthesis via de novo pathway; 5-amino-1-(5-phospho-D-ribosyl)imidazole from N(2)-formyl-N(1)-(5-phospho-D-ribosyl)glycinamide: step 2/2. The protein is Phosphoribosylformylglycinamidine cyclo-ligase of Aromatoleum aromaticum (strain DSM 19018 / LMG 30748 / EbN1) (Azoarcus sp. (strain EbN1)).